The sequence spans 429 residues: UPF0242 protein CT_616 (429 aa).

Belongs to the UPF0242 family.

This Chlamydia trachomatis serovar D (strain ATCC VR-885 / DSM 19411 / UW-3/Cx) protein is UPF0242 protein CT_616.